We begin with the raw amino-acid sequence, 189 residues long: Elongation factor P (189 aa).

This sequence belongs to the elongation factor P family.

The protein localises to the cytoplasm. It participates in protein biosynthesis; polypeptide chain elongation. Involved in peptide bond synthesis. Stimulates efficient translation and peptide-bond synthesis on native or reconstituted 70S ribosomes in vitro. Probably functions indirectly by altering the affinity of the ribosome for aminoacyl-tRNA, thus increasing their reactivity as acceptors for peptidyl transferase. The chain is Elongation factor P from Pseudomonas savastanoi pv. phaseolicola (strain 1448A / Race 6) (Pseudomonas syringae pv. phaseolicola (strain 1448A / Race 6)).